We begin with the raw amino-acid sequence, 465 residues long: Soluble pyridine nucleotide transhydrogenase (465 aa).

Residue 36-45 coordinates FAD; that stretch reads ERYDNVGGGC.

This sequence belongs to the class-I pyridine nucleotide-disulfide oxidoreductase family. FAD serves as cofactor.

It localises to the cytoplasm. It catalyses the reaction NAD(+) + NADPH = NADH + NADP(+). Functionally, conversion of NADPH, generated by peripheral catabolic pathways, to NADH, which can enter the respiratory chain for energy generation. This is Soluble pyridine nucleotide transhydrogenase from Sodalis glossinidius (strain morsitans).